A 518-amino-acid polypeptide reads, in one-letter code: Lysine 5,6-aminomutase alpha subunit (518 aa).

Residues 184–189, serine 238, tyrosine 263, arginine 268, and asparagine 299 each bind pyridoxal 5'-phosphate; that span reads RTTGQS.

It belongs to the KamD family. As to quaternary structure, heterotetramer of 2 alpha and 2 beta subunits. The cofactor is adenosylcob(III)alamin. Pyridoxal 5'-phosphate is required as a cofactor.

The enzyme catalyses (3S)-3,6-diaminohexanoate = (3S,5S)-3,5-diaminohexanoate. It carries out the reaction D-lysine = (2R,5S)-2,5-diaminohexanoate. The protein operates within amino-acid degradation; L-lysine degradation via acetate pathway. Catalyzes the migration of the L-beta-lysine and D-lysine epsilon amino group to the delta carbon to produce 3,5-diaminohexanoate and 2,5-diaminohexanoate, respectively. In Fusobacterium nucleatum subsp. nucleatum (strain ATCC 25586 / DSM 15643 / BCRC 10681 / CIP 101130 / JCM 8532 / KCTC 2640 / LMG 13131 / VPI 4355), this protein is Lysine 5,6-aminomutase alpha subunit.